Reading from the N-terminus, the 464-residue chain is Serine/threonine-protein kinase 38-like (464 aa).

Residue Ala2 is modified to N-acetylalanine. The segment at Lys64–Asp89 is S100B binding. At Thr75 the chain carries Phosphothreonine. The region spanning Phe90–Phe383 is the Protein kinase domain. Residues Ile96 to Val104 and Lys119 each bind ATP. Asp213 serves as the catalytic Proton acceptor. Ser282 carries the post-translational modification Phosphoserine; by autocatalysis. The 70-residue stretch at Glu384–Gly453 folds into the AGC-kinase C-terminal domain. Thr442 carries the post-translational modification Phosphothreonine; by STK24/MST3.

Belongs to the protein kinase superfamily. AGC Ser/Thr protein kinase family. Homodimeric S100B binds two molecules of STK38L. Interacts with MOB1 and MOB2. Interacts with MICAL1; leading to inhibit the protein kinase activity by antagonizing activation by MST1/STK4. Mg(2+) serves as cofactor. In terms of tissue distribution, highly expressed in the large and small intestine, stomach and testis. High levels also present in the brain, in particular the neurocortex, basal forebrain, hippocampus, the amygdala, cerebellum and brainstem.

It is found in the cytoplasm. The protein resides in the cytoskeleton. Its subcellular location is the membrane. It carries out the reaction L-seryl-[protein] + ATP = O-phospho-L-seryl-[protein] + ADP + H(+). It catalyses the reaction L-threonyl-[protein] + ATP = O-phospho-L-threonyl-[protein] + ADP + H(+). With respect to regulation, activated by binding of S100B which releases autoinhibitory N-lobe interactions, enabling ATP to bind and the autophosphorylation of Ser-282. Thr-442 then undergoes calcium-dependent phosphorylation by STK24/MST3. Interactions between phosphorylated Thr-442 and the N-lobe promote additional structural changes that complete the activation of the kinase. Autoinhibition is also released by the binding of MOB1/MOBKL1A and MOB2 to the N-terminal of STK38L. In terms of biological role, involved in the regulation of structural processes in differentiating and mature neuronal cells. This is Serine/threonine-protein kinase 38-like from Mus musculus (Mouse).